An 837-amino-acid polypeptide reads, in one-letter code: MLGVLKKVFDPNKRQLARLEKIADQVDALGPEMARLSDEQLRQKTEEFKARYQQGESLDDLLVEAFAVVREGAKRVLGLYPYKVQIMGGVVLHEGDIAEMKTGEGKTLTATMPVYLNALTGRGVHVVTVNEYLATRDATEMGKLYEFLGMTVGLNLSGMSREEKQAAYNADITYGTNNEFGFDYLRDNMVLYKEHIVQRPLYYAIIDEVDSILIDEARTPLIISGTAQKSTKLYVQANAFVRTLRKDVDYTYDEKTKSVQLTEEGINKAERAFGIDNLFDLKHVTLNHHIQLALRAHVTMQRDVDYVVQDGKVIIVDPFTGRLMHGRRYSDGLHQAIEAKEGLEIQNESMTLATITFQNYFRMYEKLAGMTGTAKTEEEEFRNIYNMRVVVIPTNRPVIREDRPDLIYRTMEGKFRAVVEDIAARHAKGQPVLVGTVAIETSEMLSEMLKKRGIPHNVLNAKNHAKEAEIIAQAGQKGAVTIATNMAGRGTDIKLGEGVKELGGLAVIGTERHESRRIDNQLRGRSGRQGDPGVSQFYLSLEDELMRRFGSESLMAMMDRLGMDDSQPIQSKMVTRAVESAQKRVEGNNFDARKQLLQYDDVLREQREIIYRQRYEVLDSDNLRGIIEKMIHSVIERVVNAHTPKEEVPEEWNLKGLVEYLNAHLLPEGDVTEADLRGKEPEEMIELIWAKVKARYDEKEAQIPPEQMREFERVVVLRAVDMKWMHHIDAMEQLRQGIHLRAYGQVDPLREYQMEGYAMFEEMIAAIEEEVATYIMKAEIHHNLERQEVAKGEAVHPKEDGEEPKRKPVRKAVRVGRNDPCPCGSGKKYKHCCGRTV.

ATP-binding positions include Q85, 103–107 (GEGKT), and D492. The span at 787 to 806 (QEVAKGEAVHPKEDGEEPKR) shows a compositional bias: basic and acidic residues. Residues 787-811 (QEVAKGEAVHPKEDGEEPKRKPVRK) are disordered. Positions 821, 823, 832, and 833 each coordinate Zn(2+).

It belongs to the SecA family. Monomer and homodimer. Part of the essential Sec protein translocation apparatus which comprises SecA, SecYEG and auxiliary proteins SecDF. Other proteins may also be involved. Requires Zn(2+) as cofactor.

It is found in the cell membrane. It localises to the cytoplasm. It catalyses the reaction ATP + H2O + cellular proteinSide 1 = ADP + phosphate + cellular proteinSide 2.. Part of the Sec protein translocase complex. Interacts with the SecYEG preprotein conducting channel. Has a central role in coupling the hydrolysis of ATP to the transfer of proteins into and across the cell membrane, serving as an ATP-driven molecular motor driving the stepwise translocation of polypeptide chains across the membrane. This chain is Protein translocase subunit SecA 1, found in Geobacillus kaustophilus (strain HTA426).